A 239-amino-acid chain; its full sequence is tRNA1(Val) (adenine(37)-N6)-methyltransferase (239 aa).

It belongs to the methyltransferase superfamily. tRNA (adenine-N(6)-)-methyltransferase family.

The protein localises to the cytoplasm. The catalysed reaction is adenosine(37) in tRNA1(Val) + S-adenosyl-L-methionine = N(6)-methyladenosine(37) in tRNA1(Val) + S-adenosyl-L-homocysteine + H(+). Functionally, specifically methylates the adenine in position 37 of tRNA(1)(Val) (anticodon cmo5UAC). In Vibrio parahaemolyticus serotype O3:K6 (strain RIMD 2210633), this protein is tRNA1(Val) (adenine(37)-N6)-methyltransferase.